Here is a 210-residue protein sequence, read N- to C-terminus: MIKAIVGRKLQMSQIFAEDGTAVPITLIQAGPCTVTQVKTPERDGYSALQIGFGSRKPKNVNKPMKGHLDKVGKGYFEVLREIRMENASDHEVGEDLAADVFEIGERIDVIGTTKGKGYAGTIKRWGFQRGPSGHGSKNIREPGSTGNATFPGRVIKGKKMPGQKGNKRTTVMNLRIIDVRPEENLLIVKGAVPGSQNGIVLIRKTNRAK.

Residues 126–167 (WGFQRGPSGHGSKNIREPGSTGNATFPGRVIKGKKMPGQKGN) are disordered. The span at 156-167 (IKGKKMPGQKGN) shows a compositional bias: basic residues.

The protein belongs to the universal ribosomal protein uL3 family. In terms of assembly, part of the 50S ribosomal subunit. Forms a cluster with proteins L14 and L19.

Functionally, one of the primary rRNA binding proteins, it binds directly near the 3'-end of the 23S rRNA, where it nucleates assembly of the 50S subunit. This Syntrophobacter fumaroxidans (strain DSM 10017 / MPOB) protein is Large ribosomal subunit protein uL3.